Here is a 542-residue protein sequence, read N- to C-terminus: Chaperonin GroEL (542 aa).

ATP is bound by residues 29 to 32 (TLGP), Lys50, 86 to 90 (DGTTT), Gly414, and Asp494.

This sequence belongs to the chaperonin (HSP60) family. In terms of assembly, forms a cylinder of 14 subunits composed of two heptameric rings stacked back-to-back. Interacts with the co-chaperonin GroES.

It is found in the cytoplasm. It carries out the reaction ATP + H2O + a folded polypeptide = ADP + phosphate + an unfolded polypeptide.. Together with its co-chaperonin GroES, plays an essential role in assisting protein folding. The GroEL-GroES system forms a nano-cage that allows encapsulation of the non-native substrate proteins and provides a physical environment optimized to promote and accelerate protein folding. This is Chaperonin GroEL from Cytophaga hutchinsonii (strain ATCC 33406 / DSM 1761 / CIP 103989 / NBRC 15051 / NCIMB 9469 / D465).